Consider the following 337-residue polypeptide: Anthranilate phosphoribosyltransferase (337 aa).

5-phospho-alpha-D-ribose 1-diphosphate-binding positions include Gly81, 84–85, Ser89, 91–94, 109–117, and Ala121; these read GD, NVST, and KHGNRAATS. Anthranilate is bound at residue Gly81. Residue Ser93 coordinates Mg(2+). Residue Asn112 participates in anthranilate binding. Position 167 (Arg167) interacts with anthranilate. 2 residues coordinate Mg(2+): Asp226 and Glu227.

This sequence belongs to the anthranilate phosphoribosyltransferase family. In terms of assembly, homodimer. The cofactor is Mg(2+).

The enzyme catalyses N-(5-phospho-beta-D-ribosyl)anthranilate + diphosphate = 5-phospho-alpha-D-ribose 1-diphosphate + anthranilate. Its pathway is amino-acid biosynthesis; L-tryptophan biosynthesis; L-tryptophan from chorismate: step 2/5. In terms of biological role, catalyzes the transfer of the phosphoribosyl group of 5-phosphorylribose-1-pyrophosphate (PRPP) to anthranilate to yield N-(5'-phosphoribosyl)-anthranilate (PRA). The sequence is that of Anthranilate phosphoribosyltransferase from Methylorubrum extorquens (strain CM4 / NCIMB 13688) (Methylobacterium extorquens).